A 194-amino-acid polypeptide reads, in one-letter code: Adenylate kinase isoenzyme 1 (194 aa).

19 to 24 (GSGKGT) is a binding site for ATP. The segment at 39–68 (STGDLLRAEVSSGSERGKKLQAIMEKGELV) is NMP. Residues Thr-40, Arg-45, 66-68 (ELV), 95-98 (GYPR), and Gln-102 contribute to the AMP site. The LID stretch occupies residues 132–142 (KRGETSGRVDD). Arg-133 contacts ATP. The AMP site is built by Arg-139 and Arg-150. ATP is bound at residue Gly-178.

This sequence belongs to the adenylate kinase family. AK1 subfamily. In terms of assembly, monomer. Requires Mg(2+) as cofactor. In terms of tissue distribution, skeletal muscle.

It localises to the cytoplasm. It catalyses the reaction a ribonucleoside 5'-phosphate + ATP = a ribonucleoside 5'-diphosphate + ADP. It carries out the reaction AMP + ATP = 2 ADP. The enzyme catalyses dAMP + ATP = dADP + ADP. The catalysed reaction is dATP + AMP = dADP + ADP. It catalyses the reaction dAMP + dATP = 2 dADP. It carries out the reaction a 2'-deoxyribonucleoside 5'-diphosphate + ATP = a 2'-deoxyribonucleoside 5'-triphosphate + ADP. The enzyme catalyses a ribonucleoside 5'-diphosphate + ATP = a ribonucleoside 5'-triphosphate + ADP. The catalysed reaction is CDP + GTP = CTP + GDP. It catalyses the reaction GDP + ATP = GTP + ADP. It carries out the reaction UDP + ATP = UTP + ADP. The enzyme catalyses GTP + UDP = UTP + GDP. The catalysed reaction is dTDP + GTP = dTTP + GDP. It catalyses the reaction dCDP + GTP = dCTP + GDP. It carries out the reaction dGDP + ATP = dGTP + ADP. The enzyme catalyses dADP + GTP = dATP + GDP. The catalysed reaction is thiamine diphosphate + ADP = thiamine triphosphate + AMP. In terms of biological role, catalyzes the reversible transfer of the terminal phosphate group between ATP and AMP. Also displays broad nucleoside diphosphate kinase activity. Plays an important role in cellular energy homeostasis and in adenine nucleotide metabolism. Also catalyzes at a very low rate the synthesis of thiamine triphosphate (ThTP) from thiamine diphosphate (ThDP) and ADP. This is Adenylate kinase isoenzyme 1 from Gallus gallus (Chicken).